The primary structure comprises 59 residues: MAVPRNRHSNARKNIRRSHHAKKACSAAVCSNCKQAFIPHTVCASCGFYKGKAVITVEK.

The tract at residues 1-20 (MAVPRNRHSNARKNIRRSHH) is disordered.

The protein belongs to the bacterial ribosomal protein bL32 family.

This Chlamydia trachomatis serovar A (strain ATCC VR-571B / DSM 19440 / HAR-13) protein is Large ribosomal subunit protein bL32.